Consider the following 211-residue polypeptide: Claudin-7 (211 aa).

Residues 1–7 lie on the Cytoplasmic side of the membrane; that stretch reads MANSGLQ. Residues 8–28 form a helical membrane-spanning segment; the sequence is LLGFSMAMLGWVGLIASTAIP. Topologically, residues 29–81 are extracellular; the sequence is QWQMSSYAGDNIITAQAMYKGLWMECVTQSTGMMSCKMYDSVLALPGALQATR. The chain crosses the membrane as a helical span at residues 82-102; that stretch reads ALMVVSLVLGFLAMFVATMGM. The Cytoplasmic segment spans residues 103–119; sequence KCTRCGGDDKAKKARIA. The helical transmembrane segment at 120 to 140 threads the bilayer; sequence MTGGIVFIVAGLAALVACSWI. Residues 141–160 are Extracellular-facing; the sequence is GHQIVTDFYNPLTPMNVKYE. A helical membrane pass occupies residues 161 to 181; sequence FGPAIFIGWAGSALVLLGGAL. At 182 to 211 the chain is on the cytoplasmic side; sequence LSCSCPGSESKAAYRAPRSYPKSNSSKEYV. The segment at 210–211 is interactions with TJP1, TJP2 and TJP3; the sequence is YV.

This sequence belongs to the claudin family. As to quaternary structure, directly interacts with TJP1/ZO-1, TJP2/ZO-2 and TJP3/ZO-3. The phosphorylated form interacts with EPCAM. In terms of processing, phosphorylated. As to expression, expressed predominantly in lung and kidney.

It is found in the cell membrane. It localises to the basolateral cell membrane. The protein resides in the cell junction. Its subcellular location is the tight junction. Its function is as follows. Plays a major role in tight junction-specific obliteration of the intercellular space, through calcium-independent cell-adhesion activity. In Mus musculus (Mouse), this protein is Claudin-7 (Cldn7).